Reading from the N-terminus, the 88-residue chain is U-scoloptoxin(01)-Tl1a (88 aa).

Positions Met-1–Ala-16 are cleaved as a signal peptide. Residues Gly-25–Arg-81 enclose the Chitin-binding type-2 domain. The cysteines at positions 58 and 71 are disulfide-linked.

It belongs to the scoloptoxin-01 family. In terms of processing, contains 3 disulfide bonds. In terms of tissue distribution, expressed by the venom gland.

It localises to the secreted. The protein is U-scoloptoxin(01)-Tl1a of Thereuopoda longicornis (Long-legged centipede).